A 119-amino-acid polypeptide reads, in one-letter code: Achromolysin (119 aa).

This sequence belongs to the peptidase M4 family. Ca(2+) serves as cofactor. Requires Zn(2+) as cofactor.

The protein localises to the secreted. Has staphylolytic activity. The polypeptide is Achromolysin (Achromobacter lyticus).